The sequence spans 326 residues: Target of rapamycin complex subunit LST8 (326 aa).

Methionine 1 carries the N-acetylmethionine modification. WD repeat units follow at residues 1-37 (MNTT…CTRT), 40-80 (HQDS…PIIS), 83-122 (GVSK…LQCQ), 126-165 (QVNA…NEQL), and 168-207 (EPEF…GDEV). Threonine 51 bears the Phosphothreonine mark. Lysine 86 is covalently cross-linked (Glycyl lysine isopeptide (Lys-Gly) (interchain with G-Cter in SUMO3)). Residues lysine 215, lysine 245, and lysine 261 each participate in a glycyl lysine isopeptide (Lys-Gly) (interchain with G-Cter in SUMO3) cross-link. One copy of the WD 6 repeat lies at 218-257 (AHTRYALQCRFSPDSTLLATCSADQTCKIWRTSNFSLMTE). The stretch at 268-309 (SSRGWMWGCAFSGDSQYIVTASSDNLARLWCVETGEIKREYG) is one WD 7 repeat. Residue lysine 305 forms a Glycyl lysine isopeptide (Lys-Gly) (interchain with G-Cter in SUMO3); alternate linkage. Residues lysine 305 and lysine 313 each participate in a glycyl lysine isopeptide (Lys-Gly) (interchain with G-Cter in ubiquitin); alternate cross-link. A Glycyl lysine isopeptide (Lys-Gly) (interchain with G-Cter in SUMO1); alternate cross-link involves residue lysine 313.

This sequence belongs to the WD repeat LST8 family. Part of the mechanistic target of rapamycin complex 1 (mTORC1) which contains MTOR, MLST8 and RPTOR. mTORC1 associates with AKT1S1/PRAS40, which inhibits its activity. mTORC1 binds to and is inhibited by FKBP12-rapamycin. Within mTORC1, interacts directly with MTOR and RPTOR. Component of the mechanistic target of rapamycin complex 2 (mTORC2), consisting in two heterotretramers composed of MTOR, MLST8, RICTOR and MAPKAP1/SIN1. Contrary to mTORC1, mTORC2 does not bind to and is not sensitive to FKBP12-rapamycin. mTORC1 and mTORC2 associate with DEPTOR, which regulates their activity. Interacts with RHEB. Interacts with MEAK7. Interacts with SIK3. Interacts with SLC38A7; this interaction promotes the recruitment of mTORC1 to the lysosome and its subsequent activation. In terms of processing, phosphorylation at Thr-51 by CDK1 promotes ubiquitination by the SCF(FBXW7) complex, followed by degradation. Post-translationally, ubiquitination by the SCF(FBXW7) and SCF(FBXW11) complexes following phosphorylation at Thr-51 by CDK1, leads to its degradation by the proteasome. Ubiquitination at Lys-305 and Lys-313 by TRAF2 via 'Lys-63'-linked polyubiquitin chains inhibits formation of the mTORC2 complex, while promoting formation of the mTORC1 complex: ubiquitination disrupts the interaction between MLST8 and MAPKAP1/SIN1 to favor mTORC1 assembly. Deubiquitination at Lys-305 and Lys-313 by OTUD7B promotes MLST8 interaction with MAPKAP1/SIN1, facilitating mTORC2 assembly. Sumoylation with SUMO1, SUMO2 and SUMO3 promotes assembly of both mTORC1 and mTORC2 complexes. In terms of tissue distribution, expressed at highest levels in the brain and testis, followed by lung, heart, kidney, skeletal muscle, spleen and liver. Also expressed in epididymal, abdominal and brown fat, small intestine and pancreas.

It is found in the lysosome membrane. The protein resides in the cytoplasm. Functionally, subunit of both mTORC1 and mTORC2, which regulates cell growth and survival in response to nutrient and hormonal signals. mTORC1 is activated in response to growth factors or amino acids. In response to nutrients, mTORC1 is recruited to the lysosome membrane and promotes protein, lipid and nucleotide synthesis by phosphorylating several substrates, such as ribosomal protein S6 kinase (RPS6KB1 and RPS6KB2) and EIF4EBP1 (4E-BP1). In the same time, it inhibits catabolic pathways by phosphorylating the autophagy initiation components ULK1 and ATG13, as well as transcription factor TFEB, a master regulators of lysosomal biogenesis and autophagy. The mTORC1 complex is inhibited in response to starvation and amino acid depletion. Within mTORC1, MLST8 interacts directly with MTOR and enhances its kinase activity. In nutrient-poor conditions, stabilizes the MTOR-RPTOR interaction and favors RPTOR-mediated inhibition of MTOR activity. As part of the mTORC2 complex, transduces signals from growth factors to pathways involved in proliferation, cytoskeletal organization, lipogenesis and anabolic output. mTORC2 is also activated by growth factors, but seems to be nutrient-insensitive. In response to growth factors, mTORC2 phosphorylates and activates AGC protein kinase family members, including AKT (AKT1, AKT2 and AKT3), PKC (PRKCA, PRKCB and PRKCE) and SGK1. mTORC2 functions upstream of Rho GTPases to regulate the actin cytoskeleton, probably by activating one or more Rho-type guanine nucleotide exchange factors. mTORC2 promotes the serum-induced formation of stress-fibers or F-actin. mTORC2 plays a critical role in AKT1 activation by mediating phosphorylation of different sites depending on the context, such as 'Thr-450', 'Ser-473', 'Ser-477' or 'Thr-479', facilitating the phosphorylation of the activation loop of AKT1 on 'Thr-308' by PDPK1/PDK1 which is a prerequisite for full activation. mTORC2 regulates the phosphorylation of SGK1 at 'Ser-422'. mTORC2 also modulates the phosphorylation of PRKCA on 'Ser-657'. Within mTORC2, MLST8 acts as a bridge between MAPKAP1/SIN1 and MTOR. In Rattus norvegicus (Rat), this protein is Target of rapamycin complex subunit LST8.